A 203-amino-acid polypeptide reads, in one-letter code: Small ribosomal subunit protein uS4 (203 aa).

The 61-residue stretch at 93-153 folds into the S4 RNA-binding domain; the sequence is RRLDNVVYRL…EKSKNLQQVK (61 aa).

Belongs to the universal ribosomal protein uS4 family. In terms of assembly, part of the 30S ribosomal subunit. Contacts protein S5. The interaction surface between S4 and S5 is involved in control of translational fidelity.

One of the primary rRNA binding proteins, it binds directly to 16S rRNA where it nucleates assembly of the body of the 30S subunit. Functionally, with S5 and S12 plays an important role in translational accuracy. This is Small ribosomal subunit protein uS4 from Lactobacillus delbrueckii subsp. bulgaricus (strain ATCC 11842 / DSM 20081 / BCRC 10696 / JCM 1002 / NBRC 13953 / NCIMB 11778 / NCTC 12712 / WDCM 00102 / Lb 14).